A 573-amino-acid chain; its full sequence is Methionine--tRNA ligase (573 aa).

The 'HIGH' region signature appears at 11 to 21 (PYINGIKHLGN). Zn(2+) is bound by residues C143, C146, C156, and C159. The short motif at 346–350 (QFSTS) is the 'KMSKS' region element. An ATP-binding site is contributed by T349.

The protein belongs to the class-I aminoacyl-tRNA synthetase family. MetG type 1 subfamily. As to quaternary structure, monomer. The cofactor is Zn(2+).

The protein resides in the cytoplasm. It carries out the reaction tRNA(Met) + L-methionine + ATP = L-methionyl-tRNA(Met) + AMP + diphosphate. Is required not only for elongation of protein synthesis but also for the initiation of all mRNA translation through initiator tRNA(fMet) aminoacylation. The protein is Methionine--tRNA ligase of Ruegeria sp. (strain TM1040) (Silicibacter sp.).